Here is a 98-residue protein sequence, read N- to C-terminus: Large ribosomal subunit protein uL23 (98 aa).

Belongs to the universal ribosomal protein uL23 family. Part of the 50S ribosomal subunit. Contacts protein L29, and trigger factor when it is bound to the ribosome.

In terms of biological role, one of the early assembly proteins it binds 23S rRNA. One of the proteins that surrounds the polypeptide exit tunnel on the outside of the ribosome. Forms the main docking site for trigger factor binding to the ribosome. The sequence is that of Large ribosomal subunit protein uL23 from Nitrobacter winogradskyi (strain ATCC 25391 / DSM 10237 / CIP 104748 / NCIMB 11846 / Nb-255).